The chain runs to 320 residues: Reticulocalbin-2 (320 aa).

The first 25 residues, 1-25 (MRLGPRPAALGLLLPLLLYAAVAGA), serve as a signal peptide directing secretion. 2 consecutive EF-hand domains span residues 64–99 (EQQR…SFKH) and 100–135 (YAMQ…RVID). Ca(2+)-binding residues include Asp-77, Asp-79, Asp-81, Glu-88, Asp-113, Asn-115, Asp-117, and Glu-124. At Thr-140 the chain carries Phosphothreonine. EF-hand domains are found at residues 150–185 (FRQL…HPEE), 189–224 (MTEF…DPTA), 230–265 (WILV…NNQG), and 266–301 (IAQE…FLTS). Ca(2+)-binding residues include Asp-167, Glu-176, Asp-202, Asn-204, Asp-206, Glu-213, Asp-243, Asp-245, Asp-247, Arg-249, Glu-254, Asp-279, Asn-281, Asp-283, Lys-285, and Glu-290. The Prevents secretion from ER signature appears at 317–320 (HDEL).

The protein belongs to the CREC family.

It is found in the endoplasmic reticulum lumen. Its function is as follows. Not known. Binds calcium. This is Reticulocalbin-2 (Rcn2) from Mus musculus (Mouse).